The following is a 312-amino-acid chain: Secreted RxLR effector protein 14 (312 aa).

An N-terminal signal peptide occupies residues 1–20; it reads MHSFKLLLALIVAICTSCDA. A RxLR-dEER motif is present at residues 46–61; that stretch reads RLLRAKDGKVRADEER.

This sequence belongs to the RxLR effector family.

The protein localises to the secreted. Its subcellular location is the host nucleus. Functionally, secreted effector that completely suppresses the host cell death induced by cell death-inducing proteins. This is Secreted RxLR effector protein 14 from Plasmopara viticola (Downy mildew of grapevine).